The following is an 847-amino-acid chain: MSRYDPAATESRWQAAWDAAGVFTARHDPARPKYYVLEMFPYPSGRIHMGHVRNYTMGDVVARQKAAAGFSVLHPMGWDAFGMPAENAAMERGGHPKDWTYGNIADMRAQMKPLGLSIDWSREFATCDPEYYGQQQAMFIDMMEAGLVYRKNAVVNWDPVDMTVLANEQVIDGKGWRSGAPVVRRELTQWFFRISDYAGELLEALDTLKDWPEKVRLMQANWIGQSRGLQFAFSTAGAPEGFDRLEVYTTRPDTLMGASFAAISPDHPLARHLERHDAEVAEFVAECRRVGTSEEALEKAEKKGFDTGLRVRHPFDTAWELPVYIANFILMDYGTGAIFGCPAHDQRDFEFATKYGLPIRPVFLPEGTEETALAEAFVPMKSERVHYIRGFAGAEVQSGEEGVAAAIDFCESQGVGRGVTNYRLRDWGISRQRYWGCPIPVIHCETCGVVPEAKENLPVRLPDDVSFDVPGNPLDRHPTWRDCTCPKCGAKARRETDTMDTFVDSSWYYARFTAPRAATPTDAEEADYWMNVDQYIGGIEHAILHLLYSRFFARAMQKTGHLPAKAIEPFNALFTQGMVTHEIYLTRDAAGRPVYHLPEDVTDGKLADGTPVEIIPSAKMSKSKKNVVDPMNIIRQFGADTARWFVMSDSPPERDVEWTASGAEAASKHLHRVWRLADEISRADGEANAEDGALDKATARAIAEVTQGVEGFAFNKAIAKLYEFTNTLSRSGAGAEAKKRAMRTMAQLMSPMVPHLAEEVWAMLGGEGLVAQAAWPKADPALLIDDTVTLPIQVNGKRRGEITVPKEMAASEVEKLVLADEAVQRALGGAAPKKLIVVPGRIVNVVI.

The 'HIGH' region signature appears at 41–51 (PYPSGRIHMGH). The short motif at 619 to 623 (KMSKS) is the 'KMSKS' region element. Lysine 622 contacts ATP.

It belongs to the class-I aminoacyl-tRNA synthetase family.

The protein resides in the cytoplasm. It catalyses the reaction tRNA(Leu) + L-leucine + ATP = L-leucyl-tRNA(Leu) + AMP + diphosphate. The chain is Leucine--tRNA ligase from Cereibacter sphaeroides (strain KD131 / KCTC 12085) (Rhodobacter sphaeroides).